Reading from the N-terminus, the 600-residue chain is MTGTSFYTSVLRLGRLAQQGLKFQSVKHIRPSCFSSFGLQAKRWNSTQQNDSSIDCLEPKLQGIIEDNISPSTAQKEISDIKFNIPKEMLLPDGTPDYLRLTLTSNVYEVIKETPLTKGVVISESTGVPVYLKREDLTPVFSFKIRGAHNKMASLDKQSLKNGVIACSAGNHAQGVAYSARTLGVKATIVMPQNTPEIKWRNVKRLGANVLLHGANFDIAKAECARLAKEQNLEVIHPFDDPYVIAGQGTIGLEILHQIDLRKLDAIYCAVGGGGLIAGIATYVKRIAPHVKVIGVETFDADALKKSLKDKKRVTLKEVGLFADGTAVKLVGEETFRLVSKNIDDVVLVDKDEICAAIKDVFLDTRSVVEPSGAMAVAGMKRYVAKHKPKNPNAAQVCILSGANMDFDRLRFIAERADLGLNKEVFLSVTIPERPGSFEALHNIITPRSITEFSYRYDNDDYANIYTSFVVKDRATELPLILQQISEQNMVAEDISDNELAKTHARYLIGGKSSVSKERLYRLDFPERPGALCKFLRSIKEVCSISLFHYRNCGGDIASVLAGLRVFDGQVEKLHSVLEEIGYNWVDETNNPVYLRYLRK.

Residue Lys-144 is modified to N6-(pyridoxal phosphate)lysine. ACT-like domains are found at residues 425–497 (VFLS…DISD) and 519–590 (RLYR…DETN).

This sequence belongs to the serine/threonine dehydratase family. As to quaternary structure, homotetramer. Pyridoxal 5'-phosphate is required as a cofactor.

The protein localises to the mitochondrion. It is found in the cytoplasm. It catalyses the reaction L-threonine = 2-oxobutanoate + NH4(+). It participates in amino-acid biosynthesis; L-isoleucine biosynthesis; 2-oxobutanoate from L-threonine: step 1/1. With respect to regulation, isoleucine allosterically inhibits while valine allosterically activates this enzyme. The polypeptide is Threonine dehydratase, mitochondrial (Schizosaccharomyces pombe (strain 972 / ATCC 24843) (Fission yeast)).